The primary structure comprises 8892 residues: Nonribosomal peptide synthetase 32 (8892 aa).

A Carrier 1 domain is found at 12 to 85 (EPSKLVLGRV…QLAESIAQQN (74 aa)). Serine 46 bears the O-(pantetheine 4'-phosphoryl)serine mark. A disordered region spans residues 88-112 (AGNGVNGHANGNGMNGNGLHNEATI). Low complexity predominate over residues 93–108 (NGHANGNGMNGNGLHN). Positions 567 to 956 (PTSANVPRRV…EGVDLSVRDF (390 aa)) are condensation 1. The tract at residues 989–1386 (KMAEQPEALA…GRIDSQIKIR (398 aa)) is adenylation 1. The 77-residue stretch at 1523 to 1599 (ISATAVEREL…ELAAEVQATQ (77 aa)) folds into the Carrier 2 domain. Serine 1560 carries the O-(pantetheine 4'-phosphoryl)serine modification. An epimerization 1 region spans residues 1609 to 2039 (GAIALSPIQQ…YGQTVKSLVN (431 aa)). The segment at 2083–2518 (EDILPCSPIQ…LLLPAEEAKL (436 aa)) is condensation 2. The tract at residues 2543-2934 (SQPEALAVSA…GRRDTQVKIR (392 aa)) is adenylation 2. One can recognise a Carrier 3 domain in the interval 3061–3137 (SSATPIEREL…ELAANSQTGR (77 aa)). At serine 3098 the chain carries O-(pantetheine 4'-phosphoryl)serine. The interval 3153–3590 (LSPIQQMFFD…GDTVKTLVEE (438 aa)) is epimerization 2. The segment at 3634-4061 (EDILPCSAIQ…NVDRPLRELT (428 aa)) is condensation 3. An adenylation 3 region spans residues 4098–4488 (TLPEALAISS…GRIDSQIKIR (391 aa)). A Carrier 4 domain is found at 4627–4703 (APTTDLERKL…DLSRVVEEKC (77 aa)). Serine 4664 carries the post-translational modification O-(pantetheine 4'-phosphoryl)serine. Positions 4760–5181 (EDVYPCSPMQ…LLTDEDCDQL (422 aa)) are condensation 4. Positions 5205–5605 (TSYPTAPAIS…GRRDTQVKIR (401 aa)) are adenylation 4. In terms of domain architecture, Carrier 5 spans 5745 to 5821 (MPTTPMEQKL…DLAEAMEEKG (77 aa)). At serine 5782 the chain carries O-(pantetheine 4'-phosphoryl)serine. A condensation 5 region spans residues 5868-6285 (EDVYPCSPLQ…LLSPGQMAQI (418 aa)). Residues 6307-6700 (QMTTRPAATA…GRIDTQIKIR (394 aa)) are adenylation 5. Positions 6834 to 6911 (ELTTTIERQL…ELATQTQTTE (78 aa)) constitute a Carrier 6 domain. Serine 6872 bears the O-(pantetheine 4'-phosphoryl)serine mark. An epimerization 3 region spans residues 6923 to 7360 (NFQLSPIQQM…SYSCAIESLV (438 aa)). The interval 7403–7834 (VQDILPCSPI…LLPAGDANQI (432 aa)) is condensation 6. The interval 7855–8253 (QQMAAHPTAQ…LDRIGTQVKI (399 aa)) is adenylation 6. Residues 8380 to 8456 (APVGRNEEIL…AMAARVTADI (77 aa)) form the Carrier 7 domain. Serine 8417 carries the O-(pantetheine 4'-phosphoryl)serine modification. The interval 8490–8878 (HFAFDATGPC…EIIEDSGCNV (389 aa)) is condensation 7.

It belongs to the NRP synthetase family.

The protein operates within secondary metabolite biosynthesis. Nonribosomal peptide synthetase; part of the gene cluster that mediates the biosynthesis of the lipopeptides W493 A and B. W493 A and B consist of six amino acid residues D-allo-thr, L-Ala, D-Ala, L-Gln, D-Tyr, and L-Val/L-Ile linked to a 3-hydroxy-4-methyltetradecanoic acid polyketide chain. The biosynthesis starts with formation of the linear polyketide chain by the highly reducing polyketide synthase PKS40. The gene cluster contains a putative acyl-CoA ligase (FPSE_09184) for formation of a CoA thioester polyketide. The thiol bond could be hydrolyzed by the putative thioesterase (FPSE_09186) and then accepted by the first T domain in module 1 of NRPS32. The second T domain is responsible for accepting a threonine, which is adenylated by the A domain and epimerized to the D-allo-threonine formed by the E domain. The five successive modules incorporate Ala, Ala, Gln, Tyr, and Val/Ile into the final product, which is released by cyclization. In Fusarium pseudograminearum (strain CS3096) (Wheat and barley crown-rot fungus), this protein is Nonribosomal peptide synthetase 32.